The primary structure comprises 457 residues: Bifunctional protein GlmU (457 aa).

Residues 1–230 (MSKRYAVVLA…FEESLGVNDR (230 aa)) form a pyrophosphorylase region. UDP-N-acetyl-alpha-D-glucosamine contacts are provided by residues 9 to 12 (LAAG), Lys23, Gln73, and 78 to 79 (GT). Asp103 contacts Mg(2+). UDP-N-acetyl-alpha-D-glucosamine-binding residues include Gly140, Glu155, Asn170, and Asn228. Asn228 contacts Mg(2+). The linker stretch occupies residues 231-251 (IALAEASKLMQRRINENHMRN). The N-acetyltransferase stretch occupies residues 252 to 457 (GVTLVNPEST…GYAKHLNHSK (206 aa)). UDP-N-acetyl-alpha-D-glucosamine-binding residues include Arg333 and Lys351. Residue His363 is the Proton acceptor of the active site. Residues Tyr366 and Asn377 each contribute to the UDP-N-acetyl-alpha-D-glucosamine site. Acetyl-CoA-binding positions include 386-387 (NY), Ala423, and Arg440.

In the N-terminal section; belongs to the N-acetylglucosamine-1-phosphate uridyltransferase family. The protein in the C-terminal section; belongs to the transferase hexapeptide repeat family. As to quaternary structure, homotrimer. Mg(2+) is required as a cofactor.

The protein localises to the cytoplasm. It carries out the reaction alpha-D-glucosamine 1-phosphate + acetyl-CoA = N-acetyl-alpha-D-glucosamine 1-phosphate + CoA + H(+). The catalysed reaction is N-acetyl-alpha-D-glucosamine 1-phosphate + UTP + H(+) = UDP-N-acetyl-alpha-D-glucosamine + diphosphate. It participates in nucleotide-sugar biosynthesis; UDP-N-acetyl-alpha-D-glucosamine biosynthesis; N-acetyl-alpha-D-glucosamine 1-phosphate from alpha-D-glucosamine 6-phosphate (route II): step 2/2. Its pathway is nucleotide-sugar biosynthesis; UDP-N-acetyl-alpha-D-glucosamine biosynthesis; UDP-N-acetyl-alpha-D-glucosamine from N-acetyl-alpha-D-glucosamine 1-phosphate: step 1/1. It functions in the pathway bacterial outer membrane biogenesis; LPS lipid A biosynthesis. Functionally, catalyzes the last two sequential reactions in the de novo biosynthetic pathway for UDP-N-acetylglucosamine (UDP-GlcNAc). The C-terminal domain catalyzes the transfer of acetyl group from acetyl coenzyme A to glucosamine-1-phosphate (GlcN-1-P) to produce N-acetylglucosamine-1-phosphate (GlcNAc-1-P), which is converted into UDP-GlcNAc by the transfer of uridine 5-monophosphate (from uridine 5-triphosphate), a reaction catalyzed by the N-terminal domain. The sequence is that of Bifunctional protein GlmU from Listeria monocytogenes serovar 1/2a (strain ATCC BAA-679 / EGD-e).